The primary structure comprises 391 residues: DNA/RNA-binding protein KIN17 (391 aa).

The C2H2-type zinc finger occupies 28-50; it reads CQMCQKQCRDENGFKCHCMSESH. A winged helix-turn-helix (wHTH) region spans residues 51 to 160; that stretch reads QRQLLLASEN…RQLELEKKKK (110 aa). Lysine 135 is subject to N6,N6,N6-trimethyllysine; by METTL22; alternate. N6-methyllysine; alternate is present on lysine 135. Coiled-coil stretches lie at residues 147–180 and 252–275; these read ETIR…VRRG and AKKK…TART. The segment at 206–258 is disordered; sequence NLNKGAGGSAGATTSKSSSLGPSALKLLGSAASGKRKESSQSSAQPAKKKKSA. A C-terminal subdomain A region spans residues 282–332; it reads GIVVKIITKKLGEKYHKKKGVVKEVIDRYTAVVKMTDSGDRLKLDQTHLET. The interval 338 to 389 is C-terminal subdomain B; the sequence is GKRVLVLNGGYRGNEGTLESINEKAFSATIVIETGPLKGRRVEGIQYEDISK.

The protein belongs to the KIN17 family. Associated with DNA polymerase alpha, RFC1 and cyclin A, in multiprotein DNA replication complexes. Also associates with replication origins at the G1/S phase boundary and throughout the S phase in vivo. In terms of tissue distribution, highly expressed in transformed mouse AtT20 neuroendocrine cells. Expressed at a lower level in testis, kidney, skeletal muscle, liver, lung, spleen, brain and heart and kidney. In testis, expressed at much higher levels in proliferating cells than in differentiating cells. Not detected in embryo.

The protein localises to the nucleus. Its subcellular location is the cytoplasm. Its function is as follows. Involved in DNA replication and the cellular response to DNA damage. May participate in DNA replication factories and create a bridge between DNA replication and repair mediated by high molecular weight complexes. May play a role in illegitimate recombination and regulation of gene expression. May participate in mRNA processing. Binds, in vitro, to double-stranded DNA. Also shown to bind preferentially to curved DNA in vitro and in vivo. Binds via its C-terminal domain to RNA in vitro. This Mus musculus (Mouse) protein is DNA/RNA-binding protein KIN17.